The primary structure comprises 463 residues: NADH dehydrogenase [ubiquinone] iron-sulfur protein 2, mitochondrial (463 aa).

The N-terminal 33 residues, 1–33, are a transit peptide targeting the mitochondrion; that stretch reads MAALRALRCLRGVGAPVLRPGSGIRLPSQPSRG. N6-acetyllysine is present on K62. At R118 the chain carries Symmetric dimethylarginine. 3 residues coordinate [4Fe-4S] cluster: C326, C332, and C347.

This sequence belongs to the complex I 49 kDa subunit family. As to quaternary structure, core subunit of respiratory chain NADH dehydrogenase (Complex I) which is composed of 45 different subunits. Component of the iron-sulfur (IP) fragment of the enzyme. Interacts with NDUFAF3. Interacts with NDUFAF7. Interacts with CERS2. The cofactor is [4Fe-4S] cluster. Post-translationally, dimethylation at Arg-118 by NDUFAF7 takes place after NDUFS2 assembles into the complex I, leading to stabilize the early intermediate complex.

The protein resides in the mitochondrion inner membrane. The enzyme catalyses a ubiquinone + NADH + 5 H(+)(in) = a ubiquinol + NAD(+) + 4 H(+)(out). Functionally, core subunit of the mitochondrial membrane respiratory chain NADH dehydrogenase (Complex I) which catalyzes electron transfer from NADH through the respiratory chain, using ubiquinone as an electron acceptor. Essential for the catalytic activity and assembly of complex I. Redox-sensitive, critical component of the oxygen-sensing pathway in the pulmonary vasculature which plays a key role in acute pulmonary oxygen-sensing and hypoxic pulmonary vasoconstriction. Plays an important role in carotid body sensing of hypoxia. Essential for glia-like neural stem and progenitor cell proliferation, differentiation and subsequent oligodendrocyte or neuronal maturation. This is NADH dehydrogenase [ubiquinone] iron-sulfur protein 2, mitochondrial (Ndufs2) from Mus musculus (Mouse).